A 237-amino-acid chain; its full sequence is Small ribosomal subunit protein uS3 (237 aa).

Residues 39–107 form the KH type-2 domain; it reads IRAYLMEELK…ETHLNIVEVR (69 aa). A disordered region spans residues 213 to 237; the sequence is MASERRATESDNQGGSGRERRRENA.

This sequence belongs to the universal ribosomal protein uS3 family. In terms of assembly, part of the 30S ribosomal subunit. Forms a tight complex with proteins S10 and S14.

In terms of biological role, binds the lower part of the 30S subunit head. Binds mRNA in the 70S ribosome, positioning it for translation. This chain is Small ribosomal subunit protein uS3, found in Rhizobium meliloti (strain 1021) (Ensifer meliloti).